Here is a 244-residue protein sequence, read N- to C-terminus: 3-deoxy-manno-octulosonate cytidylyltransferase (244 aa).

This sequence belongs to the KdsB family.

The protein localises to the cytoplasm. It catalyses the reaction 3-deoxy-alpha-D-manno-oct-2-ulosonate + CTP = CMP-3-deoxy-beta-D-manno-octulosonate + diphosphate. It participates in nucleotide-sugar biosynthesis; CMP-3-deoxy-D-manno-octulosonate biosynthesis; CMP-3-deoxy-D-manno-octulosonate from 3-deoxy-D-manno-octulosonate and CTP: step 1/1. Its pathway is bacterial outer membrane biogenesis; lipopolysaccharide biosynthesis. In terms of biological role, activates KDO (a required 8-carbon sugar) for incorporation into bacterial lipopolysaccharide in Gram-negative bacteria. The protein is 3-deoxy-manno-octulosonate cytidylyltransferase of Wolinella succinogenes (strain ATCC 29543 / DSM 1740 / CCUG 13145 / JCM 31913 / LMG 7466 / NCTC 11488 / FDC 602W) (Vibrio succinogenes).